The primary structure comprises 331 residues: POU domain, class 4, transcription factor 3 (331 aa).

Residues Thr81 to Pro97 are compositionally biased toward low complexity. The disordered stretch occupies residues Thr81 to Thr108. A POU-specific domain is found at Asp172–Glu249. The segment at residues Arg267–Lys326 is a DNA-binding region (homeobox).

It belongs to the POU transcription factor family. Class-4 subfamily. As to quaternary structure, interaction with ISL1. As to expression, expressed in the nervous system. Expressed in the otic vesicle during embryogenesis. Expressed in the adult retina in a subset of retinal ganglion cells (RGCs), and at a lower level in the adult tectum. Not expressed in the adult olfactory bulb.

It localises to the nucleus. The protein localises to the cytoplasm. Acts as a transcriptional activator. Acts by binding to sequences related to the consensus octamer motif 5'-ATGCAAAT-3' in the regulatory regions of its target genes. May play a role in specifying terminally differentiated neuronal phenotypes. This Danio rerio (Zebrafish) protein is POU domain, class 4, transcription factor 3 (pou4f3).